Reading from the N-terminus, the 194-residue chain is Probable molybdenum cofactor guanylyltransferase (194 aa).

Residues 8-10 (LAG), Lys-20, and Asp-99 contribute to the GTP site. A Mg(2+)-binding site is contributed by Asp-99.

The protein belongs to the MobA family. Mg(2+) serves as cofactor.

Its subcellular location is the cytoplasm. It carries out the reaction Mo-molybdopterin + GTP + H(+) = Mo-molybdopterin guanine dinucleotide + diphosphate. Transfers a GMP moiety from GTP to Mo-molybdopterin (Mo-MPT) cofactor (Moco or molybdenum cofactor) to form Mo-molybdopterin guanine dinucleotide (Mo-MGD) cofactor. The chain is Probable molybdenum cofactor guanylyltransferase from Synechococcus elongatus (strain ATCC 33912 / PCC 7942 / FACHB-805) (Anacystis nidulans R2).